A 614-amino-acid polypeptide reads, in one-letter code: MILAPLKSRILIALAASALLIPAVASAQSTDVWRKGISTVGELKHPDGFDHFDYVNTKAPKGGTLRLSTSGTFDTLNPLLAKGERATGLSLVYDTLMKSTEEELSASYGLLAEGVSYPDDIEKATFRLRQDAKWADGKPVTPEDVVFSFEKAKDLSPQLATYYTHVTKAEVSGERDITFTFDEKNNRELPQIVGQLLIVPKHWWEGTGPDGKPRDISRGTLEPVMGSGPYKIAAVSPGSSVTYERRDDYWGKDVNVNVGMNNFKTIAYTFFADQDVEFQAFKSGTVDFRQEASSSRWVTGYDFPAVKEGRVKKEELPNIYRSVGIMQAFVPNMRREKFQNPKLRKALNYAFDFEELNRTLAYGQFQRITSFFMGSELASSGLPTGRELEILQELKDQVPPEVFTTEYRNPVAGDPAKQRDNLREAVKLMKEAGYELRGNRMVNAATGQQLDMEFLIDSSGMERTILPYVQNLKKIGINATIRTVDASQYTNRTRSFDFDVTIKLWATSANPGNEQADFWGSAAADRQGSNNLAGIKNPAVDALVRKVIFAPNRDEQVAAARALDRVLLANSYVIPQFYRGEMFIAYWNTLIRPENLPEYGVGFPDAWWSGKAGN.

Residues 1–27 (MILAPLKSRILIALAASALLIPAVASA) form the signal peptide.

The protein belongs to the bacterial solute-binding protein 5 family. As to quaternary structure, the complex is composed of one ATP-binding protein (YejF), two transmembrane proteins (YejB and YejE) and a solute-binding protein (YejA).

The protein localises to the periplasm. Functionally, probably part of the ABC transporter complex YejABEF, which is likely involved in broad-spectrum peptide import. This is Probable peptide-binding protein YejA from Agrobacterium fabrum (strain C58 / ATCC 33970) (Agrobacterium tumefaciens (strain C58)).